The following is a 171-amino-acid chain: 3-hydroxydecanoyl-[acyl-carrier-protein] dehydratase (171 aa).

His70 is a catalytic residue.

The protein belongs to the thioester dehydratase family. FabA subfamily. Homodimer.

It localises to the cytoplasm. It catalyses the reaction a (3R)-hydroxyacyl-[ACP] = a (2E)-enoyl-[ACP] + H2O. The catalysed reaction is (3R)-hydroxydecanoyl-[ACP] = (2E)-decenoyl-[ACP] + H2O. It carries out the reaction (2E)-decenoyl-[ACP] = (3Z)-decenoyl-[ACP]. The protein operates within lipid metabolism; fatty acid biosynthesis. Necessary for the introduction of cis unsaturation into fatty acids. Catalyzes the dehydration of (3R)-3-hydroxydecanoyl-ACP to E-(2)-decenoyl-ACP and then its isomerization to Z-(3)-decenoyl-ACP. Can catalyze the dehydratase reaction for beta-hydroxyacyl-ACPs with saturated chain lengths up to 16:0, being most active on intermediate chain length. In Stenotrophomonas maltophilia (strain R551-3), this protein is 3-hydroxydecanoyl-[acyl-carrier-protein] dehydratase.